The primary structure comprises 126 residues: Probable V-type proton ATPase subunit G (126 aa).

The protein belongs to the V-ATPase G subunit family. In terms of assembly, V-ATPase is a heteromultimeric enzyme made up of two complexes: the ATP-hydrolytic V1 complex and the proton translocation V0 complex. The V1 complex consists of three catalytic AB heterodimers that form a heterohexamer, three peripheral stalks each consisting of EG heterodimers, one central rotor including subunits D and F, and the regulatory subunits C and H. The proton translocation complex V0 consists of the proton transport subunit a, a ring of proteolipid subunits c9c'', rotary subunit d, subunits e and f, and the accessory subunits vah-19/Ac45 and vah-20/PRR. Interacts with ced-1.

Subunit of the V1 complex of vacuolar(H+)-ATPase (V-ATPase), a multisubunit enzyme composed of a peripheral complex (V1) that hydrolyzes ATP and a membrane integral complex (V0) that translocates protons. V-ATPase is responsible for acidifying and maintaining the pH of intracellular compartments and in some cell types, is targeted to the plasma membrane, where it is responsible for acidifying the extracellular environment. In neurons, required for necrotic cell death by promoting intracellular acidification. The chain is Probable V-type proton ATPase subunit G from Caenorhabditis elegans.